The primary structure comprises 299 residues: GTPase Era (299 aa).

The Era-type G domain maps to 5–172 (KSGFVSIIGR…IDVLKTYLPE (168 aa)). The tract at residues 13-20 (GRPNVGKS) is G1. 13 to 20 (GRPNVGKS) is a binding site for GTP. Positions 39–43 (QTTRN) are G2. The segment at 60-63 (DTPG) is G3. Residues 60 to 64 (DTPGI) and 122 to 125 (NKID) each bind GTP. Residues 122 to 125 (NKID) are G4. The segment at 151 to 153 (ISA) is G5. Residues 203-280 (TSEEIPHAIG…YLELWVKVQR (78 aa)) enclose the KH type-2 domain.

Belongs to the TRAFAC class TrmE-Era-EngA-EngB-Septin-like GTPase superfamily. Era GTPase family. In terms of assembly, monomer.

Its subcellular location is the cytoplasm. The protein resides in the cell membrane. Functionally, an essential GTPase that binds both GDP and GTP, with rapid nucleotide exchange. Plays a role in 16S rRNA processing and 30S ribosomal subunit biogenesis and possibly also in cell cycle regulation and energy metabolism. The polypeptide is GTPase Era (Staphylococcus aureus (strain NCTC 8325 / PS 47)).